The following is a 228-amino-acid chain: 7-cyano-7-deazaguanine synthase (228 aa).

Residue 9–19 (LSGGPDSTTVL) coordinates ATP. The Zn(2+) site is built by Cys193, Cys203, Cys206, and Cys209.

It belongs to the QueC family. Zn(2+) serves as cofactor.

It catalyses the reaction 7-carboxy-7-deazaguanine + NH4(+) + ATP = 7-cyano-7-deazaguanine + ADP + phosphate + H2O + H(+). The protein operates within purine metabolism; 7-cyano-7-deazaguanine biosynthesis. Catalyzes the ATP-dependent conversion of 7-carboxy-7-deazaguanine (CDG) to 7-cyano-7-deazaguanine (preQ(0)). The sequence is that of 7-cyano-7-deazaguanine synthase from Rickettsia peacockii (strain Rustic).